We begin with the raw amino-acid sequence, 159 residues long: MAKNKSSKSTSNTIALNKKARHEYFLHDKFEAGVELQGWEVKSIRAGKVNITETYIHLKNGEAFLLGAQIQPLNSASTHVICDPLRYRKLLLSRRELDRLVGATERDGYSLIATAMYWKNCWVKLEFHLAKGKKLHDKREDGKDKDWSREKERLMKHKA.

The segment covering 138–153 (KREDGKDKDWSREKER) has biased composition (basic and acidic residues). The tract at residues 138–159 (KREDGKDKDWSREKERLMKHKA) is disordered.

It belongs to the SmpB family.

The protein resides in the cytoplasm. Its function is as follows. Required for rescue of stalled ribosomes mediated by trans-translation. Binds to transfer-messenger RNA (tmRNA), required for stable association of tmRNA with ribosomes. tmRNA and SmpB together mimic tRNA shape, replacing the anticodon stem-loop with SmpB. tmRNA is encoded by the ssrA gene; the 2 termini fold to resemble tRNA(Ala) and it encodes a 'tag peptide', a short internal open reading frame. During trans-translation Ala-aminoacylated tmRNA acts like a tRNA, entering the A-site of stalled ribosomes, displacing the stalled mRNA. The ribosome then switches to translate the ORF on the tmRNA; the nascent peptide is terminated with the 'tag peptide' encoded by the tmRNA and targeted for degradation. The ribosome is freed to recommence translation, which seems to be the essential function of trans-translation. This Pseudoalteromonas translucida (strain TAC 125) protein is SsrA-binding protein.